Here is a 149-residue protein sequence, read N- to C-terminus: Large ribosomal subunit protein bL9 (149 aa).

The protein belongs to the bacterial ribosomal protein bL9 family.

Functionally, binds to the 23S rRNA. In Actinobacillus succinogenes (strain ATCC 55618 / DSM 22257 / CCUG 43843 / 130Z), this protein is Large ribosomal subunit protein bL9.